We begin with the raw amino-acid sequence, 691 residues long: Elongation factor G (691 aa).

Positions 8 to 283 constitute a tr-type G domain; sequence EDYRNFGIMA…AVVDYLPSPV (276 aa). GTP contacts are provided by residues 17 to 24, 81 to 85, and 135 to 138; these read AHIDAGKT, DTPGH, and NKMD.

Belongs to the TRAFAC class translation factor GTPase superfamily. Classic translation factor GTPase family. EF-G/EF-2 subfamily.

It is found in the cytoplasm. Functionally, catalyzes the GTP-dependent ribosomal translocation step during translation elongation. During this step, the ribosome changes from the pre-translocational (PRE) to the post-translocational (POST) state as the newly formed A-site-bound peptidyl-tRNA and P-site-bound deacylated tRNA move to the P and E sites, respectively. Catalyzes the coordinated movement of the two tRNA molecules, the mRNA and conformational changes in the ribosome. The sequence is that of Elongation factor G from Methylorubrum populi (strain ATCC BAA-705 / NCIMB 13946 / BJ001) (Methylobacterium populi).